Reading from the N-terminus, the 367-residue chain is GTP cyclohydrolase FolE2 (367 aa).

It belongs to the GTP cyclohydrolase IV family.

It catalyses the reaction GTP + H2O = 7,8-dihydroneopterin 3'-triphosphate + formate + H(+). The protein operates within cofactor biosynthesis; 7,8-dihydroneopterin triphosphate biosynthesis; 7,8-dihydroneopterin triphosphate from GTP: step 1/1. Converts GTP to 7,8-dihydroneopterin triphosphate. In Ruegeria pomeroyi (strain ATCC 700808 / DSM 15171 / DSS-3) (Silicibacter pomeroyi), this protein is GTP cyclohydrolase FolE2.